The primary structure comprises 1666 residues: Complement C3 (1666 aa).

Residues 1–22 (MGPAAGPSLLLLLLASVSLALG) form the signal peptide. Phosphoserine occurs at positions 70, 296, and 302. 13 disulfides stabilise this stretch: Cys-557–Cys-821, Cys-630–Cys-666, Cys-698–Cys-725, Cys-699–Cys-732, Cys-712–Cys-733, Cys-878–Cys-1517, Cys-1106–Cys-1163, Cys-1363–Cys-1493, Cys-1394–Cys-1462, Cys-1510–Cys-1515, Cys-1522–Cys-1593, Cys-1540–Cys-1664, and Cys-1640–Cys-1649. At Ser-676 the chain carries Phosphoserine. Residues 698-733 (CCEDGMRENPMQFSCQRRARYVSLGEACVKAFLDCC) form the Anaphylatoxin-like domain. A glycan (N-linked (GlcNAc...) asparagine) is linked at Asn-944. Residue Ser-973 is modified to Phosphoserine. The segment at residues 1015–1018 (CGEQ) is a cross-link (isoglutamyl cysteine thioester (Cys-Gln)). Ser-1326 is subject to Phosphoserine. The region spanning 1522 to 1664 (CFIQLPEKIT…FTENMVVFGC (143 aa)) is the NTR domain. Ser-1576 bears the Phosphoserine mark. N-linked (GlcNAc...) asparagine glycosylation is present at Asn-1620. Positions 1637–1662 (AEECQDEENQQQCQDLGTFTENMVVF) are interaction with CFP/properdin.

As to quaternary structure, in absence of complement activation, the C3 precursor is first processed by the removal of 4 Arg residues, forming two chains, beta and alpha, linked by a disulfide bond. In terms of assembly, complement C3b is composed of complement C3b and complement C3 beta chains that are associated via disulfide bonds. Non-enzymatic component of the C5 convertase, also named C4bC2bC3b, composed of the serine protease complement C2b (C2), complement C3b, as well as complement C4b (C4). Non-enzymatic component of the C5 convertase of the alternative complement pathways composed of the serine protease complement CFB and complement C3b. Interacts with CFP; interaction takes place together with CFB in the alternative complement system and allows the complex to become active. Interacts with CR1 (via Sushi 8 and Sushi 9 domains). Interacts with CFH. Interacts with CFH. Interacts with CR2. As to quaternary structure, during pregnancy, C3dg exists as a complex (probably a 2:2:2 heterohexamer) with AGT and the proform of PRG2. Interacts with CR2 (via the N-terminal Sushi domains 1 and 2). Post-translationally, C3 precursor is first processed by the removal of 4 Arg residues, forming two chains, beta and alpha, linked by a disulfide bond. During activation of the complement systems, the alpha chain is cleaved into C3a and C3b by the C3 convertase: C3b stays linked to the beta chain, while C3a is released in the plasma. The alpha chain is cleaved by the serine protease complement C2b component of the C3 convertase to generate C3a and C3b following activation by the classical, lectin and GZMK complement systems. The alpha chain is cleaved by CFB component of the C3 convertase to generate C3a and C3b following activation by the alternative complement system. C3a is further processed by carboxypeptidases to release the C-terminal arginine residue generating the acylation stimulating protein (ASP). Levels of ASP are increased in adipocytes in the postprandial period and by insulin and dietary chylomicrons. In terms of processing, complement C3b is rapidly split in two positions by factor I (CFI) and a cofactor (CFH) to form iC3b (inactivated C3b) and C3f which is released. CFI and CFH catalyze proteolytic degradation of already-deposited complement C3b. Then iC3b is slowly cleaved (possibly by CFI) to form C3c (beta chain + alpha' chain fragment 1 + alpha' chain fragment 2), C3dg and C3f. Other proteases produce other fragments such as C3d or C3g. Post-translationally, upon activation, the internal thioester bond reacts with carbohydrate antigens on the target surface to form amide or ester bonds, leading to covalent association with the surface of pathogens. Complement C3b interacts with complement C4b via a thioester linkage. In terms of processing, phosphorylated by FAM20C in the extracellular medium.

The protein resides in the secreted. The protein localises to the cell surface. Its activity is regulated as follows. Complement activation is inhibited by VSIG4. Its function is as follows. Precursor of non-enzymatic components of the classical, alternative, lectin and GZMK complement pathways, which consist in a cascade of proteins that leads to phagocytosis and breakdown of pathogens and signaling that strengthens the adaptive immune system. Non-enzymatic component of C5 convertase. Generated following cleavage by C3 convertase, it covalently attaches to the surface of pathogens, where it acts as an opsonin that marks the surface of antigens for removal. Complement C3b binds covalently via its reactive thioester, to cell surface carbohydrates or immune aggregates. Together with complement C4b, it then recruits the serine protease complement C2b to form the C5 convertase, which cleaves and activate C5, the next component of the complement pathways. In the alternative complement pathway, recruits the serine protease CFB to form the C5 convertase that cleaves and activates C5. Functionally, mediator of local inflammatory process released following cleavage by C3 convertase. Acts by binding to its receptor, C3AR1, activating G protein-coupled receptor signaling, promoting the phosphorylation, ARRB2-mediated internalization and endocytosis of C3AR1. C3a anaphylatoxin stimulates the activation of immune cells such as mast cells and basophilic leukocytes to release inflammation agents, such as cytokines, chemokines and histamine, which promote inflammation development. Also acts as potent chemoattractant for the migration of macrophages and neutrophils to the inflamed tissues, resulting in neutralization of the inflammatory triggers by multiple ways, such as phagocytosis and generation of reactive oxidants. In terms of biological role, adipogenic hormone that stimulates triglyceride synthesis and glucose transport in adipocytes, regulating fat storage and playing a role in postprandial triglyceride clearance. Appears to stimulate triglyceride synthesis via activation of the PLC, MAPK and AKT signaling pathways. Acts by binding to its receptor, C5AR2, activating G protein-coupled receptor signaling, promoting the phosphorylation, ARRB2-mediated internalization and endocytosis of C5AR2. Its function is as follows. Acts as a chemoattractant for neutrophils in chronic inflammation. The protein is Complement C3 of Cavia porcellus (Guinea pig).